The sequence spans 272 residues: uncharacterized protein (272 aa).

6 consecutive transmembrane segments (helical) span residues 20-37, 57-77, 97-119, 155-177, 184-203, and 234-256; these read VYLSVFIVLALYCVNLLI, HPLTYTIIPTYLVVLTAHFSL, LNVSCIAIVTTGYSVLIAFIMLM, SIATLLLLWLLLFLLGLLFYVIF, LVSLLFVFLLNIMNAAVTLG, and PYSIFVYWIMLIAVIYLIGWLVI.

The protein resides in the cell membrane. This is an uncharacterized protein from Halalkalibacterium halodurans (strain ATCC BAA-125 / DSM 18197 / FERM 7344 / JCM 9153 / C-125) (Bacillus halodurans).